Reading from the N-terminus, the 363-residue chain is 3-dehydroquinate synthase (363 aa).

NAD(+)-binding positions include 107-111 (GVIGD), 131-132 (TT), lysine 144, and lysine 153. Residues glutamate 186, histidine 251, and histidine 268 each coordinate Zn(2+).

This sequence belongs to the sugar phosphate cyclases superfamily. Dehydroquinate synthase family. Co(2+) serves as cofactor. Zn(2+) is required as a cofactor. The cofactor is NAD(+).

The protein resides in the cytoplasm. The enzyme catalyses 7-phospho-2-dehydro-3-deoxy-D-arabino-heptonate = 3-dehydroquinate + phosphate. It functions in the pathway metabolic intermediate biosynthesis; chorismate biosynthesis; chorismate from D-erythrose 4-phosphate and phosphoenolpyruvate: step 2/7. Functionally, catalyzes the conversion of 3-deoxy-D-arabino-heptulosonate 7-phosphate (DAHP) to dehydroquinate (DHQ). The sequence is that of 3-dehydroquinate synthase from Nostoc punctiforme (strain ATCC 29133 / PCC 73102).